The following is a 1436-amino-acid chain: Antigen WC1.1 (1436 aa).

An N-terminal signal peptide occupies residues 1–25 (MALGRHLSLRGLCVLLLGTMVGGQA). SRCR domains follow at residues 28–131 (LRLK…VVCS), 134–234 (VRLA…VVCS), and 239–340 (VRLM…VICS). Cystine bridges form between C66–C130 and C97–C107. Residue N162 is glycosylated (N-linked (GlcNAc...) asparagine). Intrachain disulfides connect C172–C233 and C203–C213. N244 and N256 each carry an N-linked (GlcNAc...) asparagine glycan. Cystine bridges form between C265–C329, C278–C339, and C309–C319. N-linked (GlcNAc...) asparagine glycosylation is found at N351, N424, and N444. 5 SRCR domains span residues 376–476 (LRLV…VICS), 481–581 (LRMV…IWCA), 586–686 (IRLV…VICS), 689–789 (VRLA…VVCS), and 794–895 (VQLM…VICS). 3 disulfide bridges follow: C401-C465, C414-C475, and C445-C455. Residues N499 and N531 are each glycosylated (N-linked (GlcNAc...) asparagine). Cystine bridges form between C506–C570, C519–C580, C550–C560, C611–C675, C624–C685, and C655–C665. The N-linked (GlcNAc...) asparagine glycan is linked to N717. Cystine bridges form between C727/C788 and C758/C768. N-linked (GlcNAc...) asparagine glycosylation occurs at N799. Cystine bridges form between C820-C884, C833-C894, and C864-C874. 3 N-linked (GlcNAc...) asparagine glycosylation sites follow: N897, N979, and N999. SRCR domains lie at 931–1031 (LRLV…VICS), 1036–1136 (LRMV…ISCE), and 1155–1255 (LRLR…VRCS). 3 disulfides stabilise this stretch: C956-C1020, C969-C1030, and C1000-C1010. N-linked (GlcNAc...) asparagine glycans are attached at residues N1054 and N1086. 3 disulfide bridges follow: C1061-C1125, C1074-C1135, and C1105-C1115. Residues N1173 and N1214 are each glycosylated (N-linked (GlcNAc...) asparagine). Intrachain disulfides connect C1180/C1244, C1193/C1254, and C1224/C1234. The disordered stretch occupies residues 1337–1410 (EGLGSPDQMT…PGEGEESFWL (74 aa)). A compositionally biased stretch (acidic residues) spans 1348–1358 (VPDENYDDAEE). Over residues 1384-1393 (RSSQTGSFLN) the composition is skewed to polar residues. N1393 carries N-linked (GlcNAc...) asparagine glycosylation.

As to expression, expressed on subsets of CD4-CD8- gamma delta T lymphocytes.

The protein resides in the secreted. The protein is Antigen WC1.1 of Bos taurus (Bovine).